Consider the following 461-residue polypeptide: Probable protein phosphatase 2C 40 (461 aa).

The segment at Arg-34–Gly-63 is disordered. Residues Arg-57–Ile-321 enclose the PPM-type phosphatase domain. Residues Asp-98, Gly-99, Asp-273, and Asp-312 each contribute to the Mn(2+) site. The span at Lys-439–Ser-453 shows a compositional bias: basic and acidic residues. A disordered region spans residues Lys-439 to Glu-461.

This sequence belongs to the PP2C family. The cofactor is Mg(2+). It depends on Mn(2+) as a cofactor. As to expression, expressed in leaves, leaf sheaths, panicles, nodes and internodes. Expressed at low levels in roots and stems.

Its subcellular location is the nucleus. It localises to the cytoplasm. It catalyses the reaction O-phospho-L-seryl-[protein] + H2O = L-seryl-[protein] + phosphate. It carries out the reaction O-phospho-L-threonyl-[protein] + H2O = L-threonyl-[protein] + phosphate. In terms of biological role, mediates the negative regulation of osmotic and salt stress tolerance through regulation of the jasmonate and abscisic acid signaling pathways and modulation of the raffinose family oligosaccharide metabolism pathway. This Oryza sativa subsp. japonica (Rice) protein is Probable protein phosphatase 2C 40.